A 194-amino-acid polypeptide reads, in one-letter code: Sigma factor AlgU negative regulatory protein (194 aa).

The chain crosses the membrane as a helical span at residues 89 to 105 (LAVAASVTLAVLAGVRL).

The protein belongs to the RseA family.

Its subcellular location is the cell membrane. In terms of biological role, negative regulator of the sigma factor AlgU. Plays a role in the differentiation of P.aeruginosa into the alginate-producing form. Inactivation of mucA causes a switch from the non-mucoid to mucoid state resulting in constitutive expression of alginate biosynthetic genes. The chain is Sigma factor AlgU negative regulatory protein (mucA) from Pseudomonas aeruginosa (strain ATCC 15692 / DSM 22644 / CIP 104116 / JCM 14847 / LMG 12228 / 1C / PRS 101 / PAO1).